Here is a 1420-residue protein sequence, read N- to C-terminus: DNA-directed RNA polymerase subunit beta' (1420 aa).

Cys-71, Cys-73, Cys-86, and Cys-89 together coordinate Zn(2+). The Mg(2+) site is built by Asp-461, Asp-463, and Asp-465. Positions 815, 889, 896, and 899 each coordinate Zn(2+).

This sequence belongs to the RNA polymerase beta' chain family. The RNAP catalytic core consists of 2 alpha, 1 beta, 1 beta' and 1 omega subunit. When a sigma factor is associated with the core the holoenzyme is formed, which can initiate transcription. Mg(2+) serves as cofactor. It depends on Zn(2+) as a cofactor.

It catalyses the reaction RNA(n) + a ribonucleoside 5'-triphosphate = RNA(n+1) + diphosphate. Functionally, DNA-dependent RNA polymerase catalyzes the transcription of DNA into RNA using the four ribonucleoside triphosphates as substrates. This Haemophilus ducreyi (strain 35000HP / ATCC 700724) protein is DNA-directed RNA polymerase subunit beta'.